The chain runs to 98 residues: NADH-ubiquinone oxidoreductase chain 4L (98 aa).

Helical transmembrane passes span 1–21 (MSPIFINITLAFTISLLGMLV), 26–46 (LMASLLCLEGMMMSLFITIAL), and 61–81 (ITLLVFAACETAVGLALLVSI).

This sequence belongs to the complex I subunit 4L family. Core subunit of respiratory chain NADH dehydrogenase (Complex I) which is composed of 45 different subunits.

It is found in the mitochondrion inner membrane. It carries out the reaction a ubiquinone + NADH + 5 H(+)(in) = a ubiquinol + NAD(+) + 4 H(+)(out). Functionally, core subunit of the mitochondrial membrane respiratory chain NADH dehydrogenase (Complex I) which catalyzes electron transfer from NADH through the respiratory chain, using ubiquinone as an electron acceptor. Part of the enzyme membrane arm which is embedded in the lipid bilayer and involved in proton translocation. This chain is NADH-ubiquinone oxidoreductase chain 4L (MT-ND4L), found in Chlorocebus aethiops (Green monkey).